The chain runs to 177 residues: Ribosome maturation factor RimM (177 aa).

Residues 100 to 177 (EDEYYWSDLV…TVLVAWPSDY (78 aa)) enclose the PRC barrel domain.

It belongs to the RimM family. In terms of assembly, binds ribosomal protein uS19.

Its subcellular location is the cytoplasm. Functionally, an accessory protein needed during the final step in the assembly of 30S ribosomal subunit, possibly for assembly of the head region. Essential for efficient processing of 16S rRNA. May be needed both before and after RbfA during the maturation of 16S rRNA. It has affinity for free ribosomal 30S subunits but not for 70S ribosomes. This is Ribosome maturation factor RimM from Psychrobacter cryohalolentis (strain ATCC BAA-1226 / DSM 17306 / VKM B-2378 / K5).